Consider the following 254-residue polypeptide: 3-dehydroquinate dehydratase (254 aa).

3-dehydroquinate-binding positions include Glu47–Arg49 and Arg83. His144 functions as the Proton donor/acceptor in the catalytic mechanism. Lys171 acts as the Schiff-base intermediate with substrate in catalysis. Residues Arg213, Ser232, and Gln236 each coordinate 3-dehydroquinate.

It belongs to the type-I 3-dehydroquinase family. As to quaternary structure, homodimer.

It catalyses the reaction 3-dehydroquinate = 3-dehydroshikimate + H2O. The protein operates within metabolic intermediate biosynthesis; chorismate biosynthesis; chorismate from D-erythrose 4-phosphate and phosphoenolpyruvate: step 3/7. Functionally, involved in the third step of the chorismate pathway, which leads to the biosynthesis of aromatic amino acids. Catalyzes the cis-dehydration of 3-dehydroquinate (DHQ) and introduces the first double bond of the aromatic ring to yield 3-dehydroshikimate. In Neisseria meningitidis serogroup C / serotype 2a (strain ATCC 700532 / DSM 15464 / FAM18), this protein is 3-dehydroquinate dehydratase.